The following is a 158-amino-acid chain: Cyclic pyranopterin monophosphate synthase (158 aa).

Residues 75-77 (LCH) and 113-114 (ME) contribute to the substrate site. D128 is an active-site residue.

It belongs to the MoaC family. In terms of assembly, homohexamer; trimer of dimers.

It catalyses the reaction (8S)-3',8-cyclo-7,8-dihydroguanosine 5'-triphosphate = cyclic pyranopterin phosphate + diphosphate. Its pathway is cofactor biosynthesis; molybdopterin biosynthesis. Its function is as follows. Catalyzes the conversion of (8S)-3',8-cyclo-7,8-dihydroguanosine 5'-triphosphate to cyclic pyranopterin monophosphate (cPMP). The polypeptide is Cyclic pyranopterin monophosphate synthase (Dinoroseobacter shibae (strain DSM 16493 / NCIMB 14021 / DFL 12)).